The sequence spans 433 residues: Staphylopine synthase (433 aa).

NADP(+) is bound by residues 9-12 (TGPV), R33, 37-40 (SEKS), and D99. Residue H216 is the Proton donor/acceptor of the active site.

This sequence belongs to the staphylopine dehydrogenase family. In terms of assembly, homodimer.

It carries out the reaction staphylopine + NADP(+) + H2O = (2S)-2-amino-4-{[(1R)-1-carboxy-2-(1H-imidazol-4-yl)ethyl]amino}butanoate + pyruvate + NADPH + H(+). Functionally, catalyzes the NADPH-dependent reductive condensation of pyruvate to the intermediate formed by the adjacently encoded enzyme CntL, namely (2S)-2-amino-4-{[(1R)-1-carboxy-2-(1H-imidazol-4-yl)ethyl]amino}butanoate, leading to the production of staphylopine. This is the last step in the biosynthesis of the metallophore staphylopine, which is involved in the acquisition of nickel, cobalt, zinc, copper, and iron, and thus enables bacterial growth inside the host, where metal access is limited. Therefore, this enzyme probably contributes to staphylococcal virulence. Can use neither NADH nor alpha-ketoglutarate in place of NADPH and pyruvate, respectively. The chain is Staphylopine synthase from Staphylococcus aureus (strain Mu50 / ATCC 700699).